The chain runs to 427 residues: MRHLGALLFLLGVLGALAEICEIPEVDSHLVEKLGQHLLPWMDRLSLEHLNPSIYVDLRLSSLQAGTKEELYLHSLKLGYQQCLLGSAFSEDDGDCQGKPSMGQLALYLLALRANCEFVRGHKGDKLVSQLKRFLEDEKRAIGHDHKGHPHTSYYQYGLGILALCLHQKRVHDSVVDKLLYALEPFHQGHHSVDTAAMAGLAFTCLKRSNFNPGRRQRITMAVRTVREKILKAQTPEGHFGNVYSTPLALQFLMTSPMPGAELGTACLKARVALFASLQDGAFQNALMISQLLPVLNHKTYIDLIFPDCLAPRVMLEPAAETIPQAQEIISVTLQVLSLLPPYRQSISVLAGSTVEDVLKKAHELGGFTYETQASLSGPYLISVMGKAAGEREFWQLLRDPNTPLLQGIADYRPKDGETIELRLVSW.

An N-terminal signal peptide occupies residues 1 to 18 (MRHLGALLFLLGVLGALA). Disulfide bonds link cysteine 21–cysteine 267, cysteine 116–cysteine 309, and cysteine 165–cysteine 205. Residues glutamine 104, 152–156 (TSYYQ), histidine 190, 190–194 (HHSVD), asparagine 242, serine 245, glutamine 291, and 395–397 (WQL) each bind cob(II)alamin.

Belongs to the eukaryotic cobalamin transport proteins family. Interacts with CD320 (via LDL-receptor class A domains).

Its subcellular location is the secreted. Its function is as follows. Primary vitamin B12-binding and transport protein. Delivers cobalamin to cells. This is Transcobalamin-2 (TCN2) from Pongo abelii (Sumatran orangutan).